A 541-amino-acid polypeptide reads, in one-letter code: Zinc finger protein 513 (541 aa).

The disordered stretch occupies residues 1–118 (MPRRKQSHPQ…GEARGERPGP (118 aa)). The segment covering 44–55 (LEFEEEEEEDEG) has biased composition (acidic residues). Ser-85 and Ser-96 each carry phosphoserine. Over residues 103–115 (EPARGPGEARGER) the composition is skewed to basic and acidic residues. 8 consecutive C2H2-type zinc fingers follow at residues 150–172 (YSCRLCAFVSHYSSHLKRHMQTH), 178–200 (FRCGRCPYASAQLVNLTRHTRTH), 206–228 (YRCPHCPFACSSLGNLRRHQRTH), 360–382 (FACSLCPFATHYPNHLARHMKTH), 388–410 (FRCARCPYASAHLDNLKRHQRVH), 416–438 (YKCPLCPYACGNLANLKRHGRIH), 444–466 (FRCSLCNYSCNQSMNLKRHMLRH), and 472–494 (FRCATCAYTTGHWDNYKRHQKVH). A disordered region spans residues 492 to 541 (KVHGHGGAGGPGLSAPEGWAPPHSPPSVLSTRGPAALGATGSRALHSDSP).

Belongs to the krueppel C2H2-type zinc-finger protein family. Binds DNA. Can associate with the proximal promoter regions of PAX6 and SP4, and their known targets including ARR3, RHO, OPN1MW2 and OPN1SW. In terms of tissue distribution, widely expressed. In the eye, expression is greatest in the retina and least in the lens and cornea.

The protein resides in the nucleus. In terms of biological role, transcriptional regulator that plays a role in retinal development and maintenance. In Mus musculus (Mouse), this protein is Zinc finger protein 513 (Znf513).